Reading from the N-terminus, the 357-residue chain is Large ribosomal subunit protein uL10 (357 aa).

A disordered region spans residues 311–357 (MVSRSAEAAERKEKEEEEEEEAEEEEAEEEEEEEEEEAAAGLGALFG). Residues 325–348 (EEEEEEEAEEEEAEEEEEEEEEEA) are compositionally biased toward acidic residues.

Belongs to the universal ribosomal protein uL10 family. Part of the 50S ribosomal subunit. Forms part of the ribosomal stalk which helps the ribosome interact with GTP-bound translation factors. Forms a heptameric L10(L12)2(L12)2(L12)2 complex, where L10 forms an elongated spine to which the L12 dimers bind in a sequential fashion.

In terms of biological role, forms part of the ribosomal stalk, playing a central role in the interaction of the ribosome with GTP-bound translation factors. The polypeptide is Large ribosomal subunit protein uL10 (Methanopyrus kandleri (strain AV19 / DSM 6324 / JCM 9639 / NBRC 100938)).